Consider the following 533-residue polypeptide: Probable polyamine oxidase 5 (533 aa).

The FAD site is built by E37, R45, V262, and E501.

Belongs to the flavin monoamine oxidase family. FAD is required as a cofactor. Expressed in root vasculature, leaves and stems.

The protein resides in the cytoplasm. It carries out the reaction spermine + O2 + H2O = 3-aminopropanal + spermidine + H2O2. It catalyses the reaction N(1)-acetylspermine + O2 + H2O = 3-acetamidopropanal + spermidine + H2O2. The enzyme catalyses norspermine + O2 + H2O = norspermidine + 3-aminopropanal + H2O2. The catalysed reaction is thermospermine + O2 + H2O = 3-aminopropanal + spermidine + H2O2. It participates in amine and polyamine degradation; spermine degradation. In terms of biological role, flavoenzyme involved in polyamine back-conversion. Catalyzes the oxidation of the secondary amino group of polyamines, such as spermine and its acetyl derivatives. Substrate preference is spermine &gt; N(1)-acetylspermine &gt; thermospermine &gt; norspermine. Plays an important role in the regulation of polyamine intracellular concentration. Involved in xylem differentiation by controlling thermospermine homeostasis, and participating in the tightly controlled interplay between auxin and cytokinin that is necessary for proper xylem differentiation. Involved in the production of hydrogen peroxide in response to salt and cold stresses. The chain is Probable polyamine oxidase 5 from Arabidopsis thaliana (Mouse-ear cress).